Consider the following 392-residue polypeptide: Stilbene synthase 5 (392 aa).

Lys55–Arg58 provides a ligand contact to substrate. Cys164 is a catalytic residue. Substrate contacts are provided by residues Leu267 and Gly305–Pro307.

It belongs to the thiolase-like superfamily. Chalcone/stilbene synthases family. Homodimer.

The protein resides in the cytoplasm. The catalysed reaction is 4-coumaroyl-CoA + 3 malonyl-CoA + 3 H(+) = trans-resveratrol + 4 CO2 + 4 CoA. It participates in phytoalexin biosynthesis; 3,4',5-trihydroxystilbene biosynthesis; 3,4',5-trihydroxystilbene from trans-4-coumarate: step 2/2. Its function is as follows. Mediates resistance to pathogens which are sensitive to stilbenes. This chain is Stilbene synthase 5, found in Vitis vinifera (Grape).